The sequence spans 446 residues: MSHYVGRLGRRSPAGSGRLRLHRKPRRVAMLSVHTSPLHQPGTGDAGGMNVYIVELAQRLAAQNVEVEIFTRATTGALPPTVELAPGVLVRHVDAGPYEGLAKEELPAQLCAFTHGVMQAWAGHRPGHYDLVHSHYWLSGHVGWLAAERWGVPLVHAMHTMAKVKNAALADDDTPEPAARVIGETQIVRAADRLIANTAEEAGELVRHYEADPDKVAVVHPGVNLDRFRPADGRAAARARLGLPQDALIPLFAGRIQPLKAPDVLLRAVAVLLDERPELRSRIVVPVVGGPSGSGLAKPEGLQKLAARLGIADVVRFRPPVGQEQLADWFRAASVLVMPSYSESFGLVAIEAQAAGTPVLAASVGGLPVAVRDGRTGFLVQGHDPAAYARVLGDFADTPDLPARMGAAAAAHAESFGWDTSAAATAEVYTAAMHDHRRYRVRGHYG.

The disordered stretch occupies residues 1–21 (MSHYVGRLGRRSPAGSGRLRL). His34 is a binding site for 1D-myo-inositol 3-phosphate. UDP-N-acetyl-alpha-D-glucosamine contacts are provided by residues 40-41 (QP) and Gly48. Residues 45 to 50 (DAGGMN), Lys103, Tyr136, Thr160, and Arg180 each bind 1D-myo-inositol 3-phosphate. 3 residues coordinate UDP-N-acetyl-alpha-D-glucosamine: Arg255, Lys260, and Val321. Mg(2+)-binding residues include Phe330, Arg331, and Ala333. The UDP-N-acetyl-alpha-D-glucosamine site is built by Glu343 and Glu351. Thr357 contributes to the Mg(2+) binding site.

Belongs to the glycosyltransferase group 1 family. MshA subfamily. Homodimer.

The catalysed reaction is 1D-myo-inositol 3-phosphate + UDP-N-acetyl-alpha-D-glucosamine = 1D-myo-inositol 2-acetamido-2-deoxy-alpha-D-glucopyranoside 3-phosphate + UDP + H(+). Its function is as follows. Catalyzes the transfer of a N-acetyl-glucosamine moiety to 1D-myo-inositol 3-phosphate to produce 1D-myo-inositol 2-acetamido-2-deoxy-glucopyranoside 3-phosphate in the mycothiol biosynthesis pathway. The protein is D-inositol 3-phosphate glycosyltransferase of Streptomyces scabiei (strain 87.22).